A 245-amino-acid chain; its full sequence is Pyridoxine 5'-phosphate synthase (245 aa).

Asparagine 7 contacts 3-amino-2-oxopropyl phosphate. 9-10 (DH) contributes to the 1-deoxy-D-xylulose 5-phosphate binding site. Arginine 18 provides a ligand contact to 3-amino-2-oxopropyl phosphate. Histidine 43 (proton acceptor) is an active-site residue. Positions 45 and 50 each coordinate 1-deoxy-D-xylulose 5-phosphate. Glutamate 70 acts as the Proton acceptor in catalysis. 1-deoxy-D-xylulose 5-phosphate is bound at residue threonine 100. The active-site Proton donor is the histidine 190. 3-amino-2-oxopropyl phosphate-binding positions include glycine 191 and 212–213 (GH).

It belongs to the PNP synthase family. As to quaternary structure, homooctamer; tetramer of dimers.

The protein localises to the cytoplasm. It carries out the reaction 3-amino-2-oxopropyl phosphate + 1-deoxy-D-xylulose 5-phosphate = pyridoxine 5'-phosphate + phosphate + 2 H2O + H(+). Its pathway is cofactor biosynthesis; pyridoxine 5'-phosphate biosynthesis; pyridoxine 5'-phosphate from D-erythrose 4-phosphate: step 5/5. Catalyzes the complicated ring closure reaction between the two acyclic compounds 1-deoxy-D-xylulose-5-phosphate (DXP) and 3-amino-2-oxopropyl phosphate (1-amino-acetone-3-phosphate or AAP) to form pyridoxine 5'-phosphate (PNP) and inorganic phosphate. This is Pyridoxine 5'-phosphate synthase from Prochlorococcus marinus (strain MIT 9303).